A 202-amino-acid polypeptide reads, in one-letter code: Translation initiation factor IF-3 (202 aa).

Residues 178-202 (TPRKTPLLKKESETTEPKKALRSIN) are disordered. A compositionally biased stretch (basic and acidic residues) spans 185–196 (LKKESETTEPKK).

The protein belongs to the IF-3 family. In terms of assembly, monomer.

The protein localises to the cytoplasm. IF-3 binds to the 30S ribosomal subunit and shifts the equilibrium between 70S ribosomes and their 50S and 30S subunits in favor of the free subunits, thus enhancing the availability of 30S subunits on which protein synthesis initiation begins. This chain is Translation initiation factor IF-3, found in Prochlorococcus marinus (strain NATL1A).